Reading from the N-terminus, the 357-residue chain is MTIRSYKNLNLVRANIETESRQFIENKNYSIQSIGPMPGSRAGLRVVFTRPGVNLATVDIFYNGDGSTTIQYLTGANRSLGQELADHLFETINPAEFEQVNMVLQGFVETSVLPVLELSADESHIEFREHSRNAHTVVWKIISTSYQDELTVSLHITTGKLQIQGRPLSCYRVFTFNLAALLDLQGLEKVLIRQEDGKANIVQQEVARTYLQTVMADAYPHLHVTAEKLLVSGLCVKLAAPDLPDYCMLLYPELRTIEGVLKSKMSGLGMPVQQPAGFGTYFDKPAAHYILKPQFAATLRPEQINIISTAYTFFNVERHSLFHMETVVDASRMISDMARLMGKATRAWGIIKDLYIV.

In terms of assembly, forms homodimer in solution. Forms a complex with cognate antitoxin RnlB and with enterobacteria phage T4 antitoxin Dmd.

It localises to the cytoplasm. In terms of biological role, toxic component of a type II toxin-antitoxin (TA) system. A stable (half-life 27.6 minutes) endoribonuclease that in the absence of cognate antitoxin RnlB causes generalized RNA degradation. Degrades late enterobacteria phage T4 mRNAs, protecting the host against T4 reproduction. Activity is inhibited by cognate antitoxin RnlB and by enterobacteria phage T4 protein Dmd. Targets cyaA mRNA. This is mRNA endoribonuclease toxin LS (rnlA) from Escherichia coli (strain K12).